Here is a 151-residue protein sequence, read N- to C-terminus: Putative pre-16S rRNA nuclease (151 aa).

This sequence belongs to the YqgF nuclease family.

It is found in the cytoplasm. Its function is as follows. Could be a nuclease involved in processing of the 5'-end of pre-16S rRNA. This chain is Putative pre-16S rRNA nuclease, found in Myxococcus xanthus (strain DK1622).